We begin with the raw amino-acid sequence, 174 residues long: Achaete-scute homolog 3 (174 aa).

The tract at residues 92 to 105 (AFIRKRNERERQRV) is basic motif. The bHLH domain occupies 92-144 (AFIRKRNERERQRVKCVNEGYARLRRHLPEDYLEKRLSKVETLRAAIKYISYL). The tract at residues 106–144 (KCVNEGYARLRRHLPEDYLEKRLSKVETLRAAIKYISYL) is helix-loop-helix motif. The disordered stretch occupies residues 153 to 174 (SETKKNPRTASCGSLDPALRVI).

In terms of assembly, efficient DNA binding requires dimerization with another bHLH protein. As to expression, expressed in the salivary duct cells. Also expressed at lower levels in testis and epididymis. Expressed in the olfactory epithelium (OE), in a subset of apical microvillar cells.

The protein localises to the nucleus. Transcriptional repressor. Inhibits myogenesis. Plays a role in progenitor cells which differentiate into ductal and acinar, but not myoepithelial, cell lineages in the salivary glands. Involved in the functions of the microvillar cells and Bowman's glands and probably, in a non-cell-autonomous manner, in the development or regeneration of a complete olfactory epithelium (OE). The sequence is that of Achaete-scute homolog 3 (Ascl3) from Mus musculus (Mouse).